A 517-amino-acid polypeptide reads, in one-letter code: Aldehyde dehydrogenase, mitochondrial (517 aa).

The transit peptide at 1–17 (MLRAAARFGPRLGRRLL) directs the protein to the mitochondrion. The short motif at 9–24 (GPRLGRRLLSAAATQA) is the SIFI-degron element. N6-acetyllysine occurs at positions 52, 73, 78, and 159. 262–267 (GSTEIG) is an NAD(+) binding site. The active-site Proton acceptor is the Glu285. Residue Cys319 is the Nucleophile of the active site. Lys368, Lys383, Lys426, Lys428, and Lys451 each carry N6-acetyllysine.

The protein belongs to the aldehyde dehydrogenase family. In terms of assembly, homotetramer. In terms of processing, in response to mitochondrial stress, the precursor protein is ubiquitinated by the SIFI complex in the cytoplasm before mitochondrial import, leading to its degradation. Within the SIFI complex, UBR4 initiates ubiquitin chain that are further elongated or branched by KCMF1.

It localises to the mitochondrion matrix. It catalyses the reaction an aldehyde + NAD(+) + H2O = a carboxylate + NADH + 2 H(+). It participates in alcohol metabolism; ethanol degradation; acetate from ethanol: step 2/2. In terms of biological role, required for clearance of cellular formaldehyde, a cytotoxic and carcinogenic metabolite that induces DNA damage. In Homo sapiens (Human), this protein is Aldehyde dehydrogenase, mitochondrial (ALDH2).